A 525-amino-acid chain; its full sequence is Exoglucanase 1 (525 aa).

The N-terminal stretch at 1–18 is a signal peptide; that stretch reads MRTAKFATLAALVASAAA. The tract at residues 19–467 is catalytic; that stretch reads QQACSLTTER…AGNGGNNGGN (449 aa). Glu231 serves as the catalytic Nucleophile. Glu236 serves as the catalytic Proton donor. N-linked (GlcNAc...) asparagine glycosylation is present at Asn289. Residues 454–492 form a disordered region; the sequence is GLPGAGNGGNNGGNPPPPTTTTSSAPATTTTASAGPKAG. The span at 456-465 shows a compositional bias: gly residues; that stretch reads PGAGNGGNNG. The segment at 468–489 is linker; it reads PPPPTTTTSSAPATTTTASAGP. Residues 473–489 are compositionally biased toward low complexity; it reads TTTSSAPATTTTASAGP. Positions 489 to 525 constitute a CBM1 domain; the sequence is PKAGRWQQCGGIGFTGPTQCEEPYICTKLNDWYSQCL. 2 disulfide bridges follow: Cys497–Cys514 and Cys508–Cys524.

Belongs to the glycosyl hydrolase 7 (cellulase C) family.

It carries out the reaction Hydrolysis of (1-&gt;4)-beta-D-glucosidic linkages in cellulose and cellotetraose, releasing cellobiose from the non-reducing ends of the chains.. Functionally, the biological conversion of cellulose to glucose generally requires three types of hydrolytic enzymes: (1) Endoglucanases which cut internal beta-1,4-glucosidic bonds; (2) Exocellobiohydrolases that cut the disaccharide cellobiose from the non-reducing end of the cellulose polymer chain; (3) Beta-1,4-glucosidases which hydrolyze the cellobiose and other short cello-oligosaccharides to glucose. This is Exoglucanase 1 (CBH-1) from Humicola insolens (Soft-rot fungus).